We begin with the raw amino-acid sequence, 189 residues long: Pyridoxal 5'-phosphate synthase subunit PdxT (189 aa).

46–48 (GES) contacts L-glutamine. Cys78 (nucleophile) is an active-site residue. Residues Arg107 and 136–137 (IR) each bind L-glutamine. Active-site charge relay system residues include His173 and Glu175.

It belongs to the glutaminase PdxT/SNO family. As to quaternary structure, in the presence of PdxS, forms a dodecamer of heterodimers. Only shows activity in the heterodimer.

It carries out the reaction aldehydo-D-ribose 5-phosphate + D-glyceraldehyde 3-phosphate + L-glutamine = pyridoxal 5'-phosphate + L-glutamate + phosphate + 3 H2O + H(+). It catalyses the reaction L-glutamine + H2O = L-glutamate + NH4(+). Its pathway is cofactor biosynthesis; pyridoxal 5'-phosphate biosynthesis. Catalyzes the hydrolysis of glutamine to glutamate and ammonia as part of the biosynthesis of pyridoxal 5'-phosphate. The resulting ammonia molecule is channeled to the active site of PdxS. The protein is Pyridoxal 5'-phosphate synthase subunit PdxT of Roseiflexus sp. (strain RS-1).